We begin with the raw amino-acid sequence, 394 residues long: MRDFAKEIEQRKQAGLYRTRRLIAGPQQPTLTADGRSLLSFCSNDYLGLASHGENMRALEQALPEVGLGGAASHLVCGHHEAHHRLEQRLAAFTRRSSALFFSTGYMANMGVISALAGRGDTIFSDRLNHASIIDGCILSRARVRRYAHGDVAALETMLSETSGHKLVVTDGVFSMDGDIAPLTELARVCKAHDALLVVDDAHGVGVLGPQGRGSVLEAGLCQEDVPVLIGTLGKGVGTSGAFVAGSDVLIDYLVQKARTYIYTTAMPPALAAATCASLDAVESGDERRAHLDALIQRFRAGAQDLGYELMSSRTPIQPIMIGDNWTALALSRALEDEGLLVTAIRPPTVPEGEARLRVTLSAAHTEADVDRLLRALAKSRSVLSEAVAREPAL.

Arginine 18 contributes to the substrate binding site. Residue 105-106 (GY) participates in pyridoxal 5'-phosphate binding. Histidine 130 serves as a coordination point for substrate. 3 residues coordinate pyridoxal 5'-phosphate: serine 175, histidine 203, and threonine 232. An N6-(pyridoxal phosphate)lysine modification is found at lysine 235. Position 349 (threonine 349) interacts with substrate.

The protein belongs to the class-II pyridoxal-phosphate-dependent aminotransferase family. BioF subfamily. As to quaternary structure, homodimer. Pyridoxal 5'-phosphate is required as a cofactor.

It catalyses the reaction 6-carboxyhexanoyl-[ACP] + L-alanine + H(+) = (8S)-8-amino-7-oxononanoate + holo-[ACP] + CO2. Its pathway is cofactor biosynthesis; biotin biosynthesis. Its function is as follows. Catalyzes the decarboxylative condensation of pimeloyl-[acyl-carrier protein] and L-alanine to produce 8-amino-7-oxononanoate (AON), [acyl-carrier protein], and carbon dioxide. The sequence is that of 8-amino-7-oxononanoate synthase from Marinobacter nauticus (strain ATCC 700491 / DSM 11845 / VT8) (Marinobacter aquaeolei).